We begin with the raw amino-acid sequence, 202 residues long: Large ribosomal subunit protein bL17 (202 aa).

The segment covering 130–142 (AAPAATAPAPVEE) has biased composition (low complexity). The interval 130–202 (AAPAATAPAP…TEESTEDDKA (73 aa)) is disordered. Acidic residues-rich tracts occupy residues 143-168 (APAE…EASP) and 177-202 (QPVE…DDKA).

This sequence belongs to the bacterial ribosomal protein bL17 family. In terms of assembly, part of the 50S ribosomal subunit. Contacts protein L32.

The sequence is that of Large ribosomal subunit protein bL17 from Nocardioides sp. (strain ATCC BAA-499 / JS614).